The sequence spans 431 residues: Serine/threonine-protein kinase Sgk1 (431 aa).

The tract at residues 1–60 (MTVKAEAARSTLTYSRMRGMVAILIAFMKQRRMGLNDFIQKIASNTYACKHAEVQSILKM) is necessary for localization to the mitochondria. Residues 65–92 (EPELMNANPSPPPSPSQQINLGPSSNPH) are disordered. Ser74 is subject to Phosphoserine. Ser78 carries the post-translational modification Phosphoserine; by MAPK7. The span at 81–91 (QQINLGPSSNP) shows a compositional bias: polar residues. A Protein kinase domain is found at 98-355 (FHFLKVIGKG…FMEIKSHIFF (258 aa)). Residues 104 to 112 (IGKGSFGKV) and Lys127 contribute to the ATP site. The Nuclear localization signal motif lies at 131-141 (KKAILKKKEEK). Asp222 acts as the Proton acceptor in catalysis. Thr256 carries the post-translational modification Phosphothreonine; by PDPK1. The AGC-kinase C-terminal domain maps to 356–431 (SLINWDDLIN…SYAPPVDSFL (76 aa)). Thr369 bears the Phosphothreonine; by PKA mark. Phosphoserine occurs at positions 397, 401, and 422.

The protein belongs to the protein kinase superfamily. AGC Ser/Thr protein kinase family. In terms of assembly, homodimer; disulfide-linked. Interacts with MAPK3/ERK1, MAPK1/ERK2, MAP2K1/MEK1, MAP2K2/MEK2, NEDD4, NEDD4L, MAPT/TAU, MAPK7, CREB1, SLC9A3R2/NHERF2 and KCNJ1/ROMK1. Forms a trimeric complex with FBXW7 and NOTCH1 Associates with the mammalian target of rapamycin complex 2 (mTORC2) via an interaction with MAPKAP1/SIN1. Post-translationally, regulated by phosphorylation. Activated by phosphorylation on Ser-422 by mTORC2, transforming it into a substrate for PDPK1 which phosphorylates it on Thr-256. Phosphorylation on Ser-397 and Ser-401 are also essential for its activity. Phosphorylation on Ser-78 by MAPK7 is required for growth factor-induced cell cycle progression. In terms of processing, ubiquitinated by NEDD4L; which promotes proteasomal degradation. Ubiquitinated by SYVN1 at the endoplasmic reticulum; which promotes rapid proteasomal degradation and maintains a high turnover rate in resting cells.

The protein resides in the cytoplasm. It localises to the nucleus. Its subcellular location is the endoplasmic reticulum membrane. It is found in the cell membrane. The protein localises to the mitochondrion. The enzyme catalyses L-seryl-[protein] + ATP = O-phospho-L-seryl-[protein] + ADP + H(+). It carries out the reaction L-threonyl-[protein] + ATP = O-phospho-L-threonyl-[protein] + ADP + H(+). With respect to regulation, two specific sites, one in the kinase domain (Thr-256) and the other in the C-terminal regulatory region (Ser-422), need to be phosphorylated for its full activation. Phosphorylation at Ser-397 and Ser-401 are also essential for its activity. Activated by WNK1, WNK2, WNK3 and WNK4; which promote phosphorylation by mTORC2. Functionally, serine/threonine-protein kinase which is involved in the regulation of a wide variety of ion channels, membrane transporters, cellular enzymes, transcription factors, neuronal excitability, cell growth, proliferation, survival, migration and apoptosis. Plays an important role in cellular stress response. Contributes to regulation of renal Na(+) retention, renal K(+) elimination, salt appetite, gastric acid secretion, intestinal Na(+)/H(+) exchange and nutrient transport, insulin-dependent salt sensitivity of blood pressure, salt sensitivity of peripheral glucose uptake, cardiac repolarization and memory consolidation. Up-regulates Na(+) channels: SCNN1A/ENAC, SCN5A and ASIC1/ACCN2, K(+) channels: KCNJ1/ROMK1, KCNA1-5, KCNQ1-5 and KCNE1, epithelial Ca(2+) channels: TRPV5 and TRPV6, chloride channels: BSND, CLCN2 and CFTR, glutamate transporters: SLC1A3/EAAT1, SLC1A2 /EAAT2, SLC1A1/EAAT3, SLC1A6/EAAT4 and SLC1A7/EAAT5, amino acid transporters: SLC1A5/ASCT2, SLC38A1/SN1 and SLC6A19, creatine transporter: SLC6A8, Na(+)/dicarboxylate cotransporter: SLC13A2/NADC1, Na(+)-dependent phosphate cotransporter: SLC34A2/NAPI-2B, glutamate receptor: GRIK2/GLUR6. Up-regulates carriers: SLC9A3/NHE3, SLC12A1/NKCC2, SLC12A3/NCC, SLC5A3/SMIT, SLC2A1/GLUT1, SLC5A1/SGLT1 and SLC15A2/PEPT2. Regulates enzymes: GSK3A/B, PMM2 and Na(+)/K(+) ATPase, and transcription factors: CTNNB1 and nuclear factor NF-kappa-B. Stimulates sodium transport into epithelial cells by enhancing the stability and expression of SCNN1A/ENAC. This is achieved by phosphorylating the NEDD4L ubiquitin E3 ligase, promoting its interaction with 14-3-3 proteins, thereby preventing it from binding to SCNN1A/ENAC and targeting it for degradation. Regulates store-operated Ca(+2) entry (SOCE) by stimulating ORAI1 and STIM1. Regulates KCNJ1/ROMK1 directly via its phosphorylation or indirectly via increased interaction with SLC9A3R2/NHERF2. Phosphorylates MDM2 and activates MDM2-dependent ubiquitination of p53/TP53. Phosphorylates MAPT/TAU and mediates microtubule depolymerization and neurite formation in hippocampal neurons. Phosphorylates SLC2A4/GLUT4 and up-regulates its activity. Phosphorylates APBB1/FE65 and promotes its localization to the nucleus. Phosphorylates MAPK1/ERK2 and activates it by enhancing its interaction with MAP2K1/MEK1 and MAP2K2/MEK2. Phosphorylates FBXW7 and plays an inhibitory role in the NOTCH1 signaling. Phosphorylates FOXO1 resulting in its relocalization from the nucleus to the cytoplasm. Phosphorylates FOXO3, promoting its exit from the nucleus and interference with FOXO3-dependent transcription. Phosphorylates BRAF and MAP3K3/MEKK3 and inhibits their activity. Phosphorylates SLC9A3/NHE3 in response to dexamethasone, resulting in its activation and increased localization at the cell membrane. Phosphorylates CREB1. Necessary for vascular remodeling during angiogenesis. In Mus musculus (Mouse), this protein is Serine/threonine-protein kinase Sgk1 (Sgk1).